Here is a 286-residue protein sequence, read N- to C-terminus: 2-hydroxy-6-oxo-6-phenylhexa-2,4-dienoate hydrolase (286 aa).

Positions 36–271 (VIMLHGGGPG…RCGHWAQWEH (236 aa)) constitute an AB hydrolase-1 domain. Residues 42-43 (GG), Asn-51, Asn-111, Ser-180, and Arg-190 each bind substrate. His-265 serves as the catalytic Proton acceptor. Trp-266 contributes to the substrate binding site.

This sequence belongs to the AB hydrolase superfamily. BphD family. As to quaternary structure, homodimer.

It carries out the reaction 2,6-dioxo-6-phenylhexa-3-enoate + H2O = 2-oxopent-4-enoate + benzoate + H(+). It functions in the pathway xenobiotic degradation; biphenyl degradation; 2-hydroxy-2,4-pentadienoate and benzoate from biphenyl: step 4/4. In terms of biological role, catalyzes an unusual C-C bond hydrolysis of 2-hydroxy-6-oxo-6-phenylhexa-2,4-dienoic acid (HOPDA) to produce benzoic acid and 2-hydroxy-2,4-pentadienoic acid (HPD). This chain is 2-hydroxy-6-oxo-6-phenylhexa-2,4-dienoate hydrolase, found in Burkholderia cepacia (Pseudomonas cepacia).